The primary structure comprises 159 residues: Ethylene-responsive transcription factor ERF069 (159 aa).

2 disordered regions span residues 1–36 and 128–159; these read MKRI…KKLV and DAPT…EEVV. A DNA-binding region (AP2/ERF) is located at residues 74–134; that stretch reads KFRGVRQRPW…IGPDAPTNFG (61 aa). Over residues 136–148 the composition is skewed to basic and acidic residues; it reads PDVDSAVVKKQDS.

The protein belongs to the AP2/ERF transcription factor family. ERF subfamily.

It localises to the nucleus. Functionally, probably acts as a transcriptional activator. Binds to the GCC-box pathogenesis-related promoter element. May be involved in the regulation of gene expression by stress factors and by components of stress signal transduction pathways. The protein is Ethylene-responsive transcription factor ERF069 (ERF069) of Arabidopsis thaliana (Mouse-ear cress).